We begin with the raw amino-acid sequence, 567 residues long: Urease subunit alpha 1 (567 aa).

Positions 128 to 567 constitute a Urease domain; sequence GAVDTHVHYI…LPLAQLYHLF (440 aa). H133, H135, and K216 together coordinate Ni(2+). N6-carboxylysine is present on K216. H218 lines the substrate pocket. The Ni(2+) site is built by H245 and H271. H319 (proton donor) is an active-site residue. D359 serves as a coordination point for Ni(2+).

The protein belongs to the metallo-dependent hydrolases superfamily. Urease alpha subunit family. In terms of assembly, heterotrimer of UreA (gamma), UreB (beta) and UreC (alpha) subunits. Three heterotrimers associate to form the active enzyme. Ni cation serves as cofactor. Post-translationally, carboxylation allows a single lysine to coordinate two nickel ions.

Its subcellular location is the cytoplasm. The enzyme catalyses urea + 2 H2O + H(+) = hydrogencarbonate + 2 NH4(+). Its pathway is nitrogen metabolism; urea degradation; CO(2) and NH(3) from urea (urease route): step 1/1. This chain is Urease subunit alpha 1, found in Psychrobacter cryohalolentis (strain ATCC BAA-1226 / DSM 17306 / VKM B-2378 / K5).